A 546-amino-acid polypeptide reads, in one-letter code: CTP synthase (546 aa).

Residues 1–266 form an amidoligase domain region; the sequence is MTTRYIFVTG…DQLVTKRFGI (266 aa). Serine 14 is a CTP binding site. Serine 14 serves as a coordination point for UTP. Residues 15 to 20 and aspartate 72 contribute to the ATP site; that span reads SLGKGI. Residues aspartate 72 and glutamate 140 each contribute to the Mg(2+) site. Residues 147 to 149, 187 to 192, and lysine 223 contribute to the CTP site; these read DIE and KTKPTQ. Residues 187 to 192 and lysine 223 contribute to the UTP site; that span reads KTKPTQ. ATP is bound at residue 239–241; sequence KDV. The Glutamine amidotransferase type-1 domain maps to 291–542; the sequence is TIGMVGKYIE…VAAAAAYQKR (252 aa). Glycine 352 is a binding site for L-glutamine. Cysteine 379 functions as the Nucleophile; for glutamine hydrolysis in the catalytic mechanism. L-glutamine-binding positions include 380 to 383, glutamate 403, and arginine 470; that span reads LGMQ. Residues histidine 515 and glutamate 517 contribute to the active site.

Belongs to the CTP synthase family. Homotetramer.

It carries out the reaction UTP + L-glutamine + ATP + H2O = CTP + L-glutamate + ADP + phosphate + 2 H(+). The catalysed reaction is L-glutamine + H2O = L-glutamate + NH4(+). The enzyme catalyses UTP + NH4(+) + ATP = CTP + ADP + phosphate + 2 H(+). It functions in the pathway pyrimidine metabolism; CTP biosynthesis via de novo pathway; CTP from UDP: step 2/2. Allosterically activated by GTP, when glutamine is the substrate; GTP has no effect on the reaction when ammonia is the substrate. The allosteric effector GTP functions by stabilizing the protein conformation that binds the tetrahedral intermediate(s) formed during glutamine hydrolysis. Inhibited by the product CTP, via allosteric rather than competitive inhibition. Functionally, catalyzes the ATP-dependent amination of UTP to CTP with either L-glutamine or ammonia as the source of nitrogen. Regulates intracellular CTP levels through interactions with the four ribonucleotide triphosphates. This chain is CTP synthase, found in Shewanella pealeana (strain ATCC 700345 / ANG-SQ1).